The primary structure comprises 443 residues: Ribulose bisphosphate carboxylase large chain (443 aa).

Residues Asn89 and Thr139 each coordinate substrate. The active-site Proton acceptor is the Lys141. A substrate-binding site is contributed by Lys143. Mg(2+)-binding residues include Lys167, Asp169, and Glu170. N6-carboxylysine is present on Lys167. His260 serves as the catalytic Proton acceptor. Residues Arg261, His293, and Ser345 each coordinate substrate.

It belongs to the RuBisCO large chain family. Type I subfamily. In terms of assembly, heterohexadecamer of 8 large chains and 8 small chains; disulfide-linked. The disulfide link is formed within the large subunit homodimers. It depends on Mg(2+) as a cofactor. The disulfide bond which can form in the large chain dimeric partners within the hexadecamer appears to be associated with oxidative stress and protein turnover.

It localises to the plastid. The protein resides in the chloroplast. It catalyses the reaction 2 (2R)-3-phosphoglycerate + 2 H(+) = D-ribulose 1,5-bisphosphate + CO2 + H2O. It carries out the reaction D-ribulose 1,5-bisphosphate + O2 = 2-phosphoglycolate + (2R)-3-phosphoglycerate + 2 H(+). Its function is as follows. RuBisCO catalyzes two reactions: the carboxylation of D-ribulose 1,5-bisphosphate, the primary event in carbon dioxide fixation, as well as the oxidative fragmentation of the pentose substrate in the photorespiration process. Both reactions occur simultaneously and in competition at the same active site. This is Ribulose bisphosphate carboxylase large chain from Buddleja davidii (Butterfly bush).